Consider the following 956-residue polypeptide: GAS2-like protein 2B (956 aa).

In terms of domain architecture, Calponin-homology (CH) spans 23-150 (YAMKEDLAEW…CLLELARRAS (128 aa)). In terms of domain architecture, GAR spans 191–263 (CDFKNLDQMV…HYLDKHDPCH (73 aa)). Composition is skewed to polar residues over residues 332–353 (SSSYSLDDNENSPSFKNSQTPP) and 381–390 (DPQQLGNPQS). Disordered regions lie at residues 332-361 (SSSYSLDDNENSPSFKNSQTPPNDRRSMSI), 378-406 (DTQDPQQLGNPQSGHYRHHHSTSSLASQL), 853-885 (RPKIRPRRDNRPEKKPSRIPTPVSYRQVPSRNN), and 914-956 (VNSE…ESWV). The segment covering 859–868 (RRDNRPEKKP) has biased composition (basic and acidic residues).

It belongs to the GAS2 family.

Its subcellular location is the cytoplasm. It localises to the cytoskeleton. The protein resides in the cilium basal body. Its function is as follows. Together with gas2l2.L, regulates ciliary orientation and performance. The protein is GAS2-like protein 2B of Xenopus laevis (African clawed frog).